The following is a 145-amino-acid chain: Large ribosomal subunit protein uL13 (145 aa).

This sequence belongs to the universal ribosomal protein uL13 family. Part of the 50S ribosomal subunit.

Functionally, this protein is one of the early assembly proteins of the 50S ribosomal subunit, although it is not seen to bind rRNA by itself. It is important during the early stages of 50S assembly. The chain is Large ribosomal subunit protein uL13 from Bacillus cytotoxicus (strain DSM 22905 / CIP 110041 / 391-98 / NVH 391-98).